Consider the following 411-residue polypeptide: Bifunctional protein GlmU (411 aa).

The tract at residues 1–204 is pyrophosphorylase; sequence MDAIILCAGK…NGKLHGVELK (204 aa). UTP-binding positions include 6 to 9, glutamine 74, and glycine 79; that span reads LCAG. The N-acetyl-alpha-D-glucosamine 1-phosphate site is built by threonine 80, glycine 130, asparagine 142, and asparagine 158. A linker region spans residues 205-224; it reads GYWNDIGHPWDVLSANNHFL. Positions 225–411 are N-acetyltransferase; sequence NKIISKVSGK…DELVITKKRN (187 aa). Histidine 308 serves as the catalytic Proton acceptor. Acetyl-CoA-binding residues include alanine 384 and lysine 401.

This sequence in the N-terminal section; belongs to the N-acetylglucosamine-1-phosphate uridyltransferase family. The protein in the C-terminal section; belongs to the transferase hexapeptide repeat family.

The catalysed reaction is N-acetyl-alpha-D-glucosamine 1-phosphate + UTP + H(+) = UDP-N-acetyl-alpha-D-glucosamine + diphosphate. It catalyses the reaction alpha-D-glucosamine 1-phosphate + acetyl-CoA = N-acetyl-alpha-D-glucosamine 1-phosphate + CoA + H(+). It participates in nucleotide-sugar biosynthesis; UDP-N-acetyl-alpha-D-glucosamine biosynthesis; N-acetyl-alpha-D-glucosamine 1-phosphate from alpha-D-glucosamine 6-phosphate (route II): step 2/2. It functions in the pathway nucleotide-sugar biosynthesis; UDP-N-acetyl-alpha-D-glucosamine biosynthesis; UDP-N-acetyl-alpha-D-glucosamine from N-acetyl-alpha-D-glucosamine 1-phosphate: step 1/1. Functionally, catalyzes the last two sequential reactions in the de novo biosynthetic pathway for UDP-N-acetyl-glucosamine (UDP-GlcNAc). Responsible for the acetylation of GlcN-1-P to GlcNAc-1-P, and for the uridyl transfer from UTP to GlcNAc-1-P, to produce UDP-GlcNAc and pyrophosphate. In Methanococcus maripaludis (strain DSM 14266 / JCM 13030 / NBRC 101832 / S2 / LL), this protein is Bifunctional protein GlmU.